The sequence spans 340 residues: Mitochondrial distribution and morphology protein 12 (340 aa).

The region spanning 1–321 is the SMP-LTD domain; sequence MSIDLDWDGM…WPSWIKVSME (321 aa). 3 disordered regions span residues 79-107, 161-184, and 319-340; these read HYLP…TNPI, SVRE…EDRE, and SMED…EDEH. Residues 89-106 are compositionally biased toward polar residues; it reads QRRSAPSTPHIHTNTTNP. Over residues 321–340 the composition is skewed to acidic residues; sequence EDEDSDDEEGEEEGDQEDEH.

This sequence belongs to the MDM12 family. Component of the ER-mitochondria encounter structure (ERMES) or MDM complex, composed of MMM1, MDM10, MDM12 and MDM34. An MMM1 homodimer associates with one molecule of MDM12 on each side in a pairwise head-to-tail manner, and the SMP-LTD domains of MMM1 and MDM12 generate a continuous hydrophobic tunnel for phospholipid trafficking.

It localises to the mitochondrion outer membrane. It is found in the endoplasmic reticulum membrane. Its function is as follows. Component of the ERMES/MDM complex, which serves as a molecular tether to connect the endoplasmic reticulum (ER) and mitochondria. Components of this complex are involved in the control of mitochondrial shape and protein biogenesis, and function in nonvesicular lipid trafficking between the ER and mitochondria. MDM12 is required for the interaction of the ER-resident membrane protein MMM1 and the outer mitochondrial membrane-resident beta-barrel protein MDM10. The MDM12-MMM1 subcomplex functions in the major beta-barrel assembly pathway that is responsible for biogenesis of all mitochondrial outer membrane beta-barrel proteins, and acts in a late step after the SAM complex. The MDM10-MDM12-MMM1 subcomplex further acts in the TOM40-specific pathway after the action of the MDM12-MMM1 complex. Essential for establishing and maintaining the structure of mitochondria and maintenance of mtDNA nucleoids. This is Mitochondrial distribution and morphology protein 12 from Yarrowia lipolytica (strain CLIB 122 / E 150) (Yeast).